The sequence spans 269 residues: 4-hydroxy-tetrahydrodipicolinate reductase (269 aa).

NAD(+) contacts are provided by residues 11 to 16 and E37; that span reads GASGRM. R38 provides a ligand contact to NADP(+). NAD(+) contacts are provided by residues 101–103 and 125–128; these read GTT and AGNM. H158 serves as the catalytic Proton donor/acceptor. Residue H159 coordinates (S)-2,3,4,5-tetrahydrodipicolinate. K162 serves as the catalytic Proton donor. 168 to 169 provides a ligand contact to (S)-2,3,4,5-tetrahydrodipicolinate; that stretch reads GT.

Belongs to the DapB family.

The protein resides in the cytoplasm. The catalysed reaction is (S)-2,3,4,5-tetrahydrodipicolinate + NAD(+) + H2O = (2S,4S)-4-hydroxy-2,3,4,5-tetrahydrodipicolinate + NADH + H(+). The enzyme catalyses (S)-2,3,4,5-tetrahydrodipicolinate + NADP(+) + H2O = (2S,4S)-4-hydroxy-2,3,4,5-tetrahydrodipicolinate + NADPH + H(+). It participates in amino-acid biosynthesis; L-lysine biosynthesis via DAP pathway; (S)-tetrahydrodipicolinate from L-aspartate: step 4/4. In terms of biological role, catalyzes the conversion of 4-hydroxy-tetrahydrodipicolinate (HTPA) to tetrahydrodipicolinate. The protein is 4-hydroxy-tetrahydrodipicolinate reductase of Ruegeria sp. (strain TM1040) (Silicibacter sp.).